Reading from the N-terminus, the 301-residue chain is Fluoroquinolones export ATP-binding protein Rv2688c (301 aa).

The ABC transporter domain maps to 18-246 (IRVRGLTFRY…RSRRRVRVEY (229 aa)). Residue 52–59 (GPSGAGKS) coordinates ATP.

The protein belongs to the ABC transporter superfamily. As to quaternary structure, the complex is composed of 2 ATP-binding proteins (Rv2688c) and 2 transmembrane proteins (Rv2686c and Rv2687c).

The protein localises to the cell membrane. With respect to regulation, inhibited by reserpine and verapamil. Part of the ABC transporter complex Rv2686c/Rv2687c/Rv2688c involved in fluoroquinolones export. Confers resistance to ciprofloxacin and, to a lesser extent, norfloxacin, moxifloxacin and sparfloxacin. Probably responsible for energy coupling to the transport system. This Mycobacterium tuberculosis (strain ATCC 25618 / H37Rv) protein is Fluoroquinolones export ATP-binding protein Rv2688c.